A 283-amino-acid polypeptide reads, in one-letter code: Phospholipase C (283 aa).

Residues 1-24 (MKKKVLALGAAITLVAPLQSVAFA) form the signal peptide. Residues 25-38 (HENDGGQRFGVIPR) constitute a propeptide that is removed on maturation. Zn(2+) is bound by residues Trp39, His52, Asp93, His107, His156, Asp160, His166, His180, and Glu184. The Zn-dependent PLC domain maps to 39 to 283 (WSAEDKHKEG…QLWFDTYGNR (245 aa)).

The protein belongs to the bacterial zinc-metallophospholipase C family. As to quaternary structure, monomer. Zn(2+) serves as cofactor.

The catalysed reaction is a 1,2-diacyl-sn-glycero-3-phosphocholine + H2O = phosphocholine + a 1,2-diacyl-sn-glycerol + H(+). Functionally, required, with sphingomyelinase, to effect target cell lysis (hemolysis). In Bacillus cereus, this protein is Phospholipase C (cerA).